The chain runs to 294 residues: 4-hydroxy-tetrahydrodipicolinate synthase (294 aa).

A pyruvate-binding site is contributed by T45. Residue Y133 is the Proton donor/acceptor of the active site. K161 acts as the Schiff-base intermediate with substrate in catalysis. I203 is a binding site for pyruvate.

It belongs to the DapA family. In terms of assembly, homotetramer; dimer of dimers.

Its subcellular location is the cytoplasm. It catalyses the reaction L-aspartate 4-semialdehyde + pyruvate = (2S,4S)-4-hydroxy-2,3,4,5-tetrahydrodipicolinate + H2O + H(+). Its pathway is amino-acid biosynthesis; L-lysine biosynthesis via DAP pathway; (S)-tetrahydrodipicolinate from L-aspartate: step 3/4. Functionally, catalyzes the condensation of (S)-aspartate-beta-semialdehyde [(S)-ASA] and pyruvate to 4-hydroxy-tetrahydrodipicolinate (HTPA). The chain is 4-hydroxy-tetrahydrodipicolinate synthase from Shewanella sp. (strain MR-4).